A 173-amino-acid chain; its full sequence is Large ribosomal subunit protein bL12m (173 aa).

A mitochondrion-targeting transit peptide spans 1 to 33; that stretch reads MFRIASRQTRNLRALSSSKNWARSLVNTRSFRA.

The protein belongs to the bacterial ribosomal protein bL12 family. Component of the mitochondrial large ribosomal subunit (mt-LSU). Mature yeast 74S mitochondrial ribosomes consist of a small (37S) and a large (54S) subunit. The 37S small subunit contains a 15S ribosomal RNA (15S mt-rRNA) and at least 32 different proteins. The 54S large subunit contains a 21S rRNA (21S mt-rRNA) and at least 45 different proteins.

It localises to the mitochondrion. Its function is as follows. Component of the mitochondrial ribosome (mitoribosome), a dedicated translation machinery responsible for the synthesis of mitochondrial genome-encoded proteins, including at least some of the essential transmembrane subunits of the mitochondrial respiratory chain. The mitoribosomes are attached to the mitochondrial inner membrane and translation products are cotranslationally integrated into the membrane. This chain is Large ribosomal subunit protein bL12m (mrpl12), found in Schizosaccharomyces pombe (strain 972 / ATCC 24843) (Fission yeast).